The sequence spans 229 residues: PHO85 cyclin-5 (229 aa).

The span at 1 to 24 (MDGNHRFTPDSKEFNTVVKSKESS) shows a compositional bias: basic and acidic residues. The tract at residues 1–46 (MDGNHRFTPDSKEFNTVVKSKESSTGRNPYQTPPLEHNGTHHQTNY) is disordered.

The protein belongs to the cyclin family. PCL1,2 subfamily. Forms a cyclin-CDK complex with PHO85.

Its function is as follows. Cyclin partner of the cyclin-dependent kinase (CDK) PHO85. Positively controls degradation of transcription factor GCN4 under favorable growth conditions. The PCL5-PHO85 cyclin-CDK holoenzyme phosphorylates GCN4, which is required for its degradation by the E3 ubiquitin ligase complex SCF(Cdc4). Amino acid starvation reduces PCL5-PHO85-associated GCN4 kinase activity and leads to stabilization of GCN4. This chain is PHO85 cyclin-5 (PCL5), found in Saccharomyces cerevisiae (strain ATCC 204508 / S288c) (Baker's yeast).